We begin with the raw amino-acid sequence, 748 residues long: Protein REPRESSOR OF SILENCING 3 (748 aa).

Residues 10 to 86 (VRLHVGGLGE…GRLRLEKAKE (77 aa)) enclose the RRM domain. Disordered stretches follow at residues 244-318 (KSIL…QSID), 350-531 (GSSK…VSDT), 579-600 (VDEE…GGSS), and 729-748 (EWAK…NSEE). Positions 266–288 (THPSKNRQTISLEETGRQESSQA) are enriched in polar residues. Residues 294-314 (KPSEVVPDKSSDEPSRTKDLE) are compositionally biased toward basic and acidic residues. Basic residues predominate over residues 373 to 382 (LKKKTKRKRV). Acidic residues-rich tracts occupy residues 403-416 (DTMA…DSDA), 439-472 (DDSD…DAVE), and 491-518 (ESDD…DVGS). A compositionally biased stretch (polar residues) spans 520–531 (DSGSLADTVSDT).

In terms of tissue distribution, ubiquitously expressed.

The protein localises to the nucleus. Its subcellular location is the nucleolus. It is found in the nucleoplasm. Functionally, RNA-binding protein required for DNA demethylation and to eluviate siRNA-mediated transcriptional gene silencing (TGS), probably by guiding ROS1. Can bind specifically single stranded G-rich RNAs of 21-, 24- or 26-nt corresponding to promoter sequence of target genes; this interaction directs demethylation of target sequences. The chain is Protein REPRESSOR OF SILENCING 3 from Arabidopsis thaliana (Mouse-ear cress).